Consider the following 199-residue polypeptide: MNYYSTSIAKLIEELSKLPGVGPKTAQRLAFFIINMPLEEVKSLSQAIIDAKEKIKYCRICYNITDTEVCNICSDKERDHSLICVVSHPMDVVAMEKIREYKGVYHVLHGVISPIEGVGPEDIKIKELLDRVKNGNVKEVILATNPDIEGEATAMYIAKLLKPLGIKVTRIAHGVPVGGDLEYTDVVTLSRALEGRREL.

A C4-type zinc finger spans residues Cys-58–Cys-73. One can recognise a Toprim domain in the interval Ser-81 to Pro-176.

The protein belongs to the RecR family.

May play a role in DNA repair. It seems to be involved in an RecBC-independent recombinational process of DNA repair. It may act with RecF and RecO. This is Recombination protein RecR from Thermoanaerobacter sp. (strain X514).